The chain runs to 318 residues: Homoserine kinase (318 aa).

97-107 (PIGSGLGSSAC) is an ATP binding site.

This sequence belongs to the GHMP kinase family. Homoserine kinase subfamily.

Its subcellular location is the cytoplasm. It carries out the reaction L-homoserine + ATP = O-phospho-L-homoserine + ADP + H(+). The protein operates within amino-acid biosynthesis; L-threonine biosynthesis; L-threonine from L-aspartate: step 4/5. Catalyzes the ATP-dependent phosphorylation of L-homoserine to L-homoserine phosphate. The chain is Homoserine kinase from Vibrio vulnificus (strain CMCP6).